The primary structure comprises 385 residues: Mannitol-1-phosphate 5-dehydrogenase (385 aa).

4–15 provides a ligand contact to NAD(+); it reads AVHFGAGNIGRG.

It belongs to the mannitol dehydrogenase family.

The catalysed reaction is D-mannitol 1-phosphate + NAD(+) = beta-D-fructose 6-phosphate + NADH + H(+). This Lactococcus lactis subsp. lactis (strain IL1403) (Streptococcus lactis) protein is Mannitol-1-phosphate 5-dehydrogenase.